Consider the following 951-residue polypeptide: MSKKRVHELGKQLKEQGIELSNQELVEKLHALGYLEVKSHSSSLEDDQAHAAYEKILAERKPKPAPVRPSGPGFVVRKRAHVEPPTVTAPAAPPPAEPEYAEPQYAEPQQAEQAYEPEPQEAQPEAAPEPVAAPEQPAEAAPLAAQAAPSPGAEAAAPAAPQAQPAQPAAPVAPPAPSAQPSAPQPPAAQPRPPQPPMPSRPPPAGYRPAPPPGARPPMSAAPGAPAQPGAAGQPPRPPVDPRTLRPTSTQAVVISRPLVPVRRVTPPTSARQQFPVAPGPRALGEVRELKVVPGSLGREREFIDVSRDKRRGRQPGRPISEEQAKSLSGKELLQAAISDRAYIPIRGKKKKPTKKGAKTQITEKAEHKKVIRIEESISVSELSQVMGVKASDLIRKLMQMGKMVTINAQIDADTAAILALEHGYTVEKKGFEVEEFIPEVEVDESKLVIRPPVVTVMGHVDHGKTSLLDAIRQADVAAGEAGGITQHIGAYSVNTPQGPITFLDTPGHEAFTAMRQRGAQVTDLVVLVVAADDGVMPQTVESIKAAKAAGVTILVAINKVDKPQAAPERVMQQLTEYELVAEQWGGTTIMLPVSARTKQGIPELLEYIALQSEVLELKANPDKLAAGRVIEAKLEKGRGPVATVLVEEGTLRVGDALVTGVHFGRVRAMMNERGEQVDNVGPGYPVEVLGLSGVPVAGDEFDVVEDEKAAKEVAQHRATKQRQKELGGVKKATLEDLFAKAKTSGQKVLNLVVKADVQGSSEAVSQALEKAATKKVGVKILESAVGAITKSDVLTAAAGNAVIVGFNTKPESEIENIASQQGVKILMFGIIYEAVDRIREEMAGLLEPIIKEKPLGKAEVRQVFNIPRVGQIAGSAVTEGVVKRAGHVRVVRDRKVIFTGKIGSLKRVKDDVREVAQGFECGIGVDGFSDVKQGDILEVYELEEIRPSLD.

Disordered regions lie at residues 58-255 (AERK…AVVI) and 305-329 (DVSRDKRRGRQPGRPISEEQAKSLS). Residues 101–170 (AEPQYAEPQQ…PQAQPAQPAA (70 aa)) show a composition bias toward low complexity. The segment covering 171-216 (PVAPPAPSAQPSAPQPPAAQPRPPQPPMPSRPPPAGYRPAPPPGAR) has biased composition (pro residues). A compositionally biased stretch (low complexity) spans 217–234 (PPMSAAPGAPAQPGAAGQ). The tr-type G domain occupies 450–619 (IRPPVVTVMG…ALQSEVLELK (170 aa)). The segment at 459–466 (GHVDHGKT) is G1. 459 to 466 (GHVDHGKT) lines the GTP pocket. The G2 stretch occupies residues 484 to 488 (GITQH). The tract at residues 505-508 (DTPG) is G3. GTP is bound by residues 505-509 (DTPGH) and 559-562 (NKVD). A G4 region spans residues 559 to 562 (NKVD). The G5 stretch occupies residues 595 to 597 (SAR).

It belongs to the TRAFAC class translation factor GTPase superfamily. Classic translation factor GTPase family. IF-2 subfamily.

It is found in the cytoplasm. Its function is as follows. One of the essential components for the initiation of protein synthesis. Protects formylmethionyl-tRNA from spontaneous hydrolysis and promotes its binding to the 30S ribosomal subunits. Also involved in the hydrolysis of GTP during the formation of the 70S ribosomal complex. This chain is Translation initiation factor IF-2, found in Anaeromyxobacter dehalogenans (strain 2CP-1 / ATCC BAA-258).